We begin with the raw amino-acid sequence, 703 residues long: Histone-lysine N-methyltransferase SETDB2 (703 aa).

Residues 178 to 248 (FTKGNPLQLP…DNFSFNNHVR (71 aa)) enclose the MBD domain. The 75-residue stretch at 310–384 (KCCNCTDGCL…LCQNRVVQHG (75 aa)) folds into the Pre-SET domain. Zn(2+) is bound by residues cysteine 312, cysteine 314, cysteine 318, cysteine 324, cysteine 326, cysteine 365, cysteine 369, cysteine 371, and cysteine 376. One can recognise an SET domain in the interval 387–678 (LRLQVFKTNT…AGTELTWDYS (292 aa)). Residue 397 to 399 (KGW) coordinates S-adenosyl-L-methionine. The tract at residues 492-588 (TFSPRQARSG…SSSVISGGHP (97 aa)) is disordered. Basic residues predominate over residues 511–525 (RRPKTKTSMLQKRRR). Over residues 550–560 (PEQKSSAGTKI) the composition is skewed to polar residues. Residues 571-586 (SGYVSEESSSSVISGG) are compositionally biased toward low complexity. S-adenosyl-L-methionine is bound by residues arginine 632 and 635-636 (NH). Cysteine 638, cysteine 691, cysteine 693, and cysteine 698 together coordinate Zn(2+).

Belongs to the class V-like SAM-binding methyltransferase superfamily.

The protein resides in the nucleus. It is found in the chromosome. It catalyses the reaction N(6),N(6)-dimethyl-L-lysyl(9)-[histone H3] + S-adenosyl-L-methionine = N(6),N(6),N(6)-trimethyl-L-lysyl(9)-[histone H3] + S-adenosyl-L-homocysteine + H(+). Histone methyltransferase involved in left-right axis specification in early development and mitosis. Specifically trimethylates 'Lys-9' of histone H3 (H3K9me3). H3K9me3 is a specific tag for epigenetic transcriptional repression that recruits HP1 (CBX1, CBX3 and/or CBX5) proteins to methylated histones. Contributes to H3K9me3 in both the interspersed repetitive elements and centromere-associated repeats. Plays a role in chromosome condensation and segregation during mitosis. The protein is Histone-lysine N-methyltransferase SETDB2 (setdb2) of Xenopus laevis (African clawed frog).